The following is a 70-amino-acid chain: Cytochrome c oxidase subunit 8B, mitochondrial (70 aa).

The N-terminal 24 residues, 1 to 24, are a transit peptide targeting the mitochondrion; that stretch reads MLRLAPTVRLLQAPLRGWAVPKAH. Residues 25–35 are Mitochondrial matrix-facing; the sequence is ITAKPAKTPTS. The chain crosses the membrane as a helical span at residues 36 to 59; that stretch reads PKEQAIGLSVTFLSFLLPAGWVLY. Residues 60 to 70 are Mitochondrial intermembrane-facing; the sequence is HLDNYKKSSAA.

This sequence belongs to the cytochrome c oxidase VIII family. In terms of assembly, component of the cytochrome c oxidase (complex IV, CIV), a multisubunit enzyme composed of 14 subunits. The complex is composed of a catalytic core of 3 subunits MT-CO1, MT-CO2 and MT-CO3, encoded in the mitochondrial DNA, and 11 supernumerary subunits COX4I1 (or COX4I2), COX5A, COX5B, COX6A2 (or COX6A1), COX6B1 (or COX6B2), COX6C, COX7A1 (or COX7A2), COX7B, COX7C, COX8B and NDUFA4, which are encoded in the nuclear genome. The complex exists as a monomer or a dimer and forms supercomplexes (SCs) in the inner mitochondrial membrane with NADH-ubiquinone oxidoreductase (complex I, CI) and ubiquinol-cytochrome c oxidoreductase (cytochrome b-c1 complex, complex III, CIII), resulting in different assemblies (supercomplex SCI(1)III(2)IV(1) and megacomplex MCI(2)III(2)IV(2)).

Its subcellular location is the mitochondrion inner membrane. The protein operates within energy metabolism; oxidative phosphorylation. Functionally, component of the cytochrome c oxidase, the last enzyme in the mitochondrial electron transport chain which drives oxidative phosphorylation. The respiratory chain contains 3 multisubunit complexes succinate dehydrogenase (complex II, CII), ubiquinol-cytochrome c oxidoreductase (cytochrome b-c1 complex, complex III, CIII) and cytochrome c oxidase (complex IV, CIV), that cooperate to transfer electrons derived from NADH and succinate to molecular oxygen, creating an electrochemical gradient over the inner membrane that drives transmembrane transport and the ATP synthase. Cytochrome c oxidase is the component of the respiratory chain that catalyzes the reduction of oxygen to water. Electrons originating from reduced cytochrome c in the intermembrane space (IMS) are transferred via the dinuclear copper A center (CU(A)) of subunit 2 and heme A of subunit 1 to the active site in subunit 1, a binuclear center (BNC) formed by heme A3 and copper B (CU(B)). The BNC reduces molecular oxygen to 2 water molecules using 4 electrons from cytochrome c in the IMS and 4 protons from the mitochondrial matrix. In Bos taurus (Bovine), this protein is Cytochrome c oxidase subunit 8B, mitochondrial (COX8B).